The following is a 94-amino-acid chain: Co-chaperonin GroES (94 aa).

This sequence belongs to the GroES chaperonin family. As to quaternary structure, heptamer of 7 subunits arranged in a ring. Interacts with the chaperonin GroEL.

It localises to the cytoplasm. Functionally, together with the chaperonin GroEL, plays an essential role in assisting protein folding. The GroEL-GroES system forms a nano-cage that allows encapsulation of the non-native substrate proteins and provides a physical environment optimized to promote and accelerate protein folding. GroES binds to the apical surface of the GroEL ring, thereby capping the opening of the GroEL channel. This is Co-chaperonin GroES from Desulfitobacterium hafniense (strain DSM 10664 / DCB-2).